We begin with the raw amino-acid sequence, 31 residues long: Cytochrome b6-f complex subunit 6 (31 aa).

Residues 4–24 (ITSYFGFLLVVLTITSALFIG) traverse the membrane as a helical segment.

Belongs to the PetL family. As to quaternary structure, the 4 large subunits of the cytochrome b6-f complex are cytochrome b6, subunit IV (17 kDa polypeptide, PetD), cytochrome f and the Rieske protein, while the 4 small subunits are PetG, PetL, PetM and PetN. The complex functions as a dimer.

The protein resides in the plastid. It is found in the chloroplast thylakoid membrane. In terms of biological role, component of the cytochrome b6-f complex, which mediates electron transfer between photosystem II (PSII) and photosystem I (PSI), cyclic electron flow around PSI, and state transitions. PetL is important for photoautotrophic growth as well as for electron transfer efficiency and stability of the cytochrome b6-f complex. The protein is Cytochrome b6-f complex subunit 6 of Jasminum nudiflorum (Winter jasmine).